Here is a 2506-residue protein sequence, read N- to C-terminus: MQPHNPYVEPIAIVGMACRLPGDVVSPSKLWDLLVQERSAQSKVPANRFNVDSWYHPDKQRPGSITTRGGYFLSQDDSFRQFDPSFFGINPKEAASMDPQQRKLLEVVYESFEAAGARLEDVSGSKTACYVGNFTWDIGQMQARDINHGAPYHMTGGGLTILSNRINYVFNLKGPSMTIDTACSSTMYALHLACRSLQAGDCSAAVVAGTNLIFGIEQQIGSVRLGVLSPTSVCHTFDESADGYARAEAVGSLYLKTLSQAIADGDPIRAVIRGTAINANGRSPGISHPSAQEQEMVIRQAYARAGLRLDQTGYFECHGTGTPVGDPLEVSAIGNVFGPVRSAESPLLIGSVKTNLGHGEAASAISSLIKTALCLEKGEIPATIGIKRLNPALNLRDGRLKIVQTLSPWPDSQQYRRASVNSFGYGGANAHAILDAVQSYLGEFCQSIPASLTTPGQPSLKRYFLLPFSAHSESTLRQNIKSISHSFKCDVNLPDLAYTLASCRSNHSERAFALVAGDSSCSKLVDSLASDKLTFGTAMGAVPKLAFIFTGQGAQWPQMGHELVQHYAVVRQTLRDLGNVIAKLPNPPEWDLLDALDQPKSKSRVNEAELSQPLTTAIQIAIVNLLRSWGVHPTAVVGHSSGEIAAAYSAGLISAAEAIIIAYQRGAATVKSTQRGAMLAVGIGSDEALQAIHDIPDIGIACYNAPDSVTLSGTEEAVDMARGRFSRAGVFNRKLITSGNAYHSKLMAEAGQFYEASLKQCLLPNDPPSTGNADITMFSSVTEEPVSTLALEYWRQNLESPVHFDQATQKLLKARPEVNLVVEIGPHSALAAPLKAIRAAVGYSPERLVYLSALKRNSDSVECLLKMVGSLFLSGLPFALSTVNADATVHRDDKTGSEMIQYSHGSFIRDLPTYQWVYDEEPLWNESRLSTDIRFRSYPHHDLLGSRLPGTSNIAPAWRNMISLESVPWLRDHRVGDDIVFPAAGYVTLAIEAITQIRRSTISAVTDAYTLPAYEFAVSTFVNGTWTQHATGSVQVDNDSASDQSISSVENMAGSRGGINKDSYDRRWYGAMDKVGLIYGPGFKTLSDIRASPEHHWATAEVSGNATDKLMGRQSQYILHPTTIDACLQLSIIAAHHGKPESLKKVYLPVLIPKLTIWPHHSSQGLPLTACGRGLHRGLRSVQTFTGLSNPNHQTILQAEISFSSLETAVGENGTGKSPQPYTRLVWKPDLDRMTNTQAQILFHGTQDDISTSKHFFSRLEEVTRLAIRSSAERLPENLQADRLPGHMQKFLEWLKMEGLALSTNEAADGLTGESLLDKIDAIARSVEQTVPEAAMVAQLNSRMPEILAGTVGALDVMVEDNLMSRIYEEGFGQTGAYAKLSDVIDLVAHKDPRLRILELGAGTGGATKPMLKALHGDTPLPKYEKYDFTDVSKAFLGVAQDKFQGYRNLDFGILDIEKDPVAQGFPEQSYDIVFASNVIHATRNVASSLRNCKRLLKPDGKLLIIETTKQRQVTGFMLGALPGYWLGADDGRPSSPFLSKTLWHQRLLDAGLSGADIVLDDYPEPADCTTLIMSRNSSEAANHASMNGANHTNGANSINNISEINGVTGVNQLNGAKSLKPSTVTLIYRREPQPLQRALEAKYAQLGISTRSMALEDIPNSLERDSRTIMLAELEDPLMARMTPAEMHAVQRYTQQAATAIWVTNGNVLRGQDPEKSLVFGLAKSIMTEQPSFHLCSVDVDIGDGKADCGNSTTLLVETEMAFHHDPNGELDTELVEKDGLVYISRYVTDDTENANFERYFAIKPTVMALARGESSYYSLQFENVGRVDSFYFKEQSLKPLGENEVLLDVDAAPLDSLSIAALKGQIASPCFGLEIVGTVRAVGSKTSKLKEGNRIHPVVTSLHVVELLLGLHAGDQILVDCRQAHLACIISQVALLEGSRVYVTFDSEAGRDILQQLGNDSHLVDRQANFKQALLGTSFDAIVTDSTDSYQLFDNIINSGGRIVALANTAPVEMVNAAVSFLNKSVTIGMFDPFNGFATAPVQHSSLLAKALKLLRRNVIRPIPSTQYDLSYLPEAVGHISQDDYVGRVVLTRTPNTAVPIHTVAEPLMFNSEASYLLIGCLGGLGRSLTTWMVSRGARHFIFLSRSGADKPEAAALVKELHELTRAQYLDLTVQVVRGDVSIRDDVSRAISCATKPIKGVVQAAMVLKDTLFTEMSLAQFNQVLHPKMLGTIHLHELLQGHDLDFFVMTSSVLGAIGAAMQSNYSAANAYLDHMARHRQSLGLQATSIALGMILNVGHVEEHPEVEKALKRNGMYGISVDEYLLMMEFACRRRDLSSTTNSHDPYKYDPCATAHIVTGMDPTRVSRAGGKSLWLKDNRLRNLVAALGGGNNGDGFNAEQSAGPSTHELLEAARAEGGVAAVKVTTLGLILARFSKLVLLPVHKIDPGKALAHYGMDSMISAELKSWAWKEFTVDLPFLGLLDQSLTFDDLAEKVVALAETKST.

The region spanning 8 to 436 (VEPIAIVGMA…GANAHAILDA (429 aa)) is the Ketosynthase family 3 (KS3) domain. Residues C183, H318, and H358 each act as for beta-ketoacyl synthase activity in the active site. The region spanning 547 to 875 (FIFTGQGAQW…KMVGSLFLSG (329 aa)) is the Malonyl-CoA:ACP transacylase (MAT) domain. Residues 941 to 1050 (HDLLGSRLPG…ASDQSISSVE (110 aa)) are N-terminal hotdog fold. The PKS/mFAS DH domain occupies 941–1212 (HDLLGSRLPG…FSSLETAVGE (272 aa)). The active-site Proton acceptor; for dehydratase activity is the H973. Residues 1060-1212 (NKDSYDRRWY…FSSLETAVGE (153 aa)) are C-terminal hotdog fold. Residue D1125 is the Proton donor; for dehydratase activity of the active site. Residues 1263 to 1563 (VTRLAIRSSA…SGADIVLDDY (301 aa)) form a methyltransferase (CMet) domain region. An Enoyl reductase (ER) domain is found at 1827 to 2093 (GRVDSFYFKE…QDDYVGRVVL (267 aa)). A Ketoreductase (KR) domain is found at 2116–2296 (ASYLLIGCLG…QATSIALGMI (181 aa)). The region spanning 2423–2501 (AVKVTTLGLI…DLAEKVVALA (79 aa)) is the Carrier domain. The residue at position 2460 (S2460) is an O-(pantetheine 4'-phosphoryl)serine.

Pantetheine 4'-phosphate serves as cofactor.

The protein operates within antifungal biosynthesis. In terms of biological role, highly reducing polyketide synthase; part of the gene cluster that mediates the biosynthesis of the tetrahydropyranyl antifungal agent restricticin that acts as an inhibitor of CYP51 and blocks the ergosterol biosynthesis. The highly reducing polyketide synthase rstn3, the short chain dehydrogenase rstn4, the cyclase rstn5, the FAD-dependent monooxygenase rstn6 and the enoylreductase rstn7 are required to generate the first stable intermediate desmethylrestrictinol. Rstn3 with rstn7 biosynthesize the first polyketide chain intermediate that is reduced by rstn4, followed by epoxidation by rstn6 before 6-endo cyclization via epoxide opening by rstn5 leads to desmethylrestrictinol. The methyltransferase rstn1 then catalyzes the C4 O-methylation of desmethylrestrictinol to produce restrictinol, and the nonribosomal peptide synthetase rstn8 catalyzes the C3 esterification of restrictinol with glycine that leads to restricticin. This chain is Highly reducing polyketide synthase rstn3, found in Aspergillus nomiae NRRL (strain ATCC 15546 / NRRL 13137 / CBS 260.88 / M93).